Here is a 314-residue protein sequence, read N- to C-terminus: Ribonuclease Z (314 aa).

Positions 62, 64, 66, 67, 144, 215, and 273 each coordinate Zn(2+). The active-site Proton acceptor is aspartate 66.

It belongs to the RNase Z family. Homodimer. Zn(2+) is required as a cofactor.

The enzyme catalyses Endonucleolytic cleavage of RNA, removing extra 3' nucleotides from tRNA precursor, generating 3' termini of tRNAs. A 3'-hydroxy group is left at the tRNA terminus and a 5'-phosphoryl group is left at the trailer molecule.. Zinc phosphodiesterase, which displays some tRNA 3'-processing endonuclease activity. Probably involved in tRNA maturation, by removing a 3'-trailer from precursor tRNA. The protein is Ribonuclease Z of Prochlorococcus marinus (strain NATL2A).